The following is a 1117-amino-acid chain: Endogenous retrovirus group K member 9 Pol protein (1117 aa).

A lipid anchor (N-myristoyl glycine) is attached at glycine 2. Residues 58–195 (KDWKRIGKEL…AGQVPVTLQP (138 aa)) form the Reverse transcriptase domain. The tract at residues 165–264 (GKGPELVGPS…APPSRQGSEL (100 aa)) is disordered. The segment covering 232–247 (GMPPAPQGRAPYPQPP) has biased composition (pro residues). CCHC-type zinc fingers lie at residues 544-561 (GKCY…NCPV) and 580-597 (DLCP…QCRS). The disordered stretch occupies residues 598-629 (KFDKNGQPLSGNEQRGQPQAPQQTGAFPIQPF). The span at 604–622 (QPLSGNEQRGQPQAPQQTG) shows a compositional bias: polar residues. Residues 800–875 (FEGLVDTGAD…IPLNLWGRDL (76 aa)) form the Peptidase A2 domain. Residue aspartate 805 is part of the active site. A G-patch domain is found at 890-936 (YSPTSQKIMTKRGYIPGKGLGKNEDGIKIPFEAKINQKREGIGYPFL).

The protein belongs to the beta type-B retroviral polymerase family. HERV class-II K(HML-2) pol subfamily. In terms of processing, myristoylation is essential for retroviral assembly. Alteration of the glycine residue leads to a block in the budding of particles and an accumulation of Gag inside the cell. Post-translationally, specific enzymatic cleavages may yield mature proteins.

It localises to the cell membrane. It catalyses the reaction Processing at the authentic HIV-1 PR recognition site and release of the mature p17 matrix and the p24 capsid protein, as a result of the cleavage of the -SQNY-|-PIVQ- cleavage site.. It carries out the reaction DNA(n) + a 2'-deoxyribonucleoside 5'-triphosphate = DNA(n+1) + diphosphate. The catalysed reaction is Endonucleolytic cleavage to 5'-phosphomonoester.. Functionally, the products of the Gag polyproteins of infectious retroviruses perform highly complex orchestrated tasks during the assembly, budding, maturation, and infection stages of the viral replication cycle. During viral assembly, the proteins form membrane associations and self-associations that ultimately result in budding of an immature virion from the infected cell. Gag precursors also function during viral assembly to selectively bind and package two plus strands of genomic RNA. Endogenous Gag proteins may have kept, lost or modified their original function during evolution. In terms of biological role, early post-infection, the reverse transcriptase converts the viral RNA genome into double-stranded viral DNA. The RNase H domain of the reverse transcriptase performs two functions. It degrades the RNA template and specifically removes the RNA primer from the RNA/DNA hybrid. Following nuclear import, the integrase catalyzes the insertion of the linear, double-stranded viral DNA into the host cell chromosome. Endogenous Pol proteins may have kept, lost or modified their original function during evolution. The sequence is that of Endogenous retrovirus group K member 9 Pol protein (ERVK-9) from Homo sapiens (Human).